Consider the following 854-residue polypeptide: DNA mismatch repair protein MutS (854 aa).

Position 615–622 (615–622) interacts with ATP; sequence GPNMGGKS.

It belongs to the DNA mismatch repair MutS family.

Its function is as follows. This protein is involved in the repair of mismatches in DNA. It is possible that it carries out the mismatch recognition step. This protein has a weak ATPase activity. The polypeptide is DNA mismatch repair protein MutS (Aliivibrio fischeri (strain ATCC 700601 / ES114) (Vibrio fischeri)).